Here is a 393-residue protein sequence, read N- to C-terminus: Methyltransferase-like protein 22 (393 aa).

Residues 54 to 87 (WTDSGAEDSGPTDVSTEEMPPAGSGSGHSHEDLS) are disordered. Residue S120 is modified to Phosphoserine.

Belongs to the methyltransferase superfamily. METTL22 family. In terms of assembly, interacts with members of the heat shock protein 90 and 70 families; these proteins probably are methylation substrates.

The protein localises to the nucleus. It catalyses the reaction L-lysyl-[protein] + 3 S-adenosyl-L-methionine = N(6),N(6),N(6)-trimethyl-L-lysyl-[protein] + 3 S-adenosyl-L-homocysteine + 3 H(+). Protein N-lysine methyltransferase. Trimethylates KIN at Lys-135 (in vitro). This Mus musculus (Mouse) protein is Methyltransferase-like protein 22 (Mettl22).